The primary structure comprises 518 residues: Nuclear receptor ROR-gamma (518 aa).

The tract at residues 1–30 (MDRAPQRQHRASRELLAAKKTHTSQIEVIP) is modulating. NR C4-type zinc fingers lie at residues 31-51 (CKIC…CEGC) and 67-91 (CTRQ…LQKC). A DNA-binding region (nuclear receptor) is located at residues 31–96 (CKICGDKSSG…RLQKCLALGM (66 aa)). Disordered regions lie at residues 105-183 (RMSK…SGSG) and 238-258 (HPGL…SFRS). The span at 109–118 (KQRDSLHAEV) shows a compositional bias: basic and acidic residues. Low complexity predominate over residues 119 to 130 (QKQLQQRQQQQQ). The 240-residue stretch at 269–508 (EIEHLVQSVC…PPLYKELFST (240 aa)) folds into the NR LBD domain. Residues 501 to 506 (LYKELF) carry the AF-2 motif.

This sequence belongs to the nuclear hormone receptor family. NR1 subfamily. In terms of assembly, interacts (via AF-2 motif) with the coactivator NCOA2 (via LXXLL motif). Interacts with the corepressor NCOR1. Interacts with CRY1. Interacts (via AF-2 motif) with the coactivators NCOA1 and PPARGC1A (via LXXLL motif). Interacts (via AF-2 motif) with PROX1. Interacts with FOXP3. Interacts with NR0B2. In terms of tissue distribution, isoform 1 is widely expressed in many tissues, including liver and adipose, and highly expressed in skeletal muscle. Isoform 2 is primarily expressed in immature thymocytes.

The protein localises to the nucleus. In terms of biological role, nuclear receptor that binds DNA as a monomer to ROR response elements (RORE) containing a single core motif half-site 5'-AGGTCA-3' preceded by a short A-T-rich sequence. Key regulator of cellular differentiation, immunity, peripheral circadian rhythm as well as lipid, steroid, xenobiotics and glucose metabolism. Considered to have intrinsic transcriptional activity, have some natural ligands like oxysterols that act as agonists (25-hydroxycholesterol) or inverse agonists (7-oxygenated sterols), enhancing or repressing the transcriptional activity, respectively. Recruits distinct combinations of cofactors to target gene regulatory regions to modulate their transcriptional expression, depending on the tissue, time and promoter contexts. Regulates the circadian expression of clock genes such as CRY1, BMAL1 and NR1D1 in peripheral tissues and in a tissue-selective manner. Competes with NR1D1 for binding to their shared DNA response element on some clock genes such as BMAL1, CRY1 and NR1D1 itself, resulting in NR1D1-mediated repression or RORC-mediated activation of the expression, leading to the circadian pattern of clock genes expression. Therefore influences the period length and stability of the clock. Involved in the regulation of the rhythmic expression of genes involved in glucose and lipid metabolism, including PLIN2 and AVPR1A. Negative regulator of adipocyte differentiation through the regulation of early phase genes expression, such as MMP3. Controls adipogenesis as well as adipocyte size and modulates insulin sensitivity in obesity. In liver, has specific and redundant functions with RORA as positive or negative modulator of expression of genes encoding phase I and Phase II proteins involved in the metabolism of lipids, steroids and xenobiotics, such as SULT1E1. Also plays a role in the regulation of hepatocyte glucose metabolism through the regulation of G6PC1 and PCK1. Regulates the rhythmic expression of PROX1 and promotes its nuclear localization. Plays an indispensable role in the induction of IFN-gamma dependent anti-mycobacterial systemic immunity. Essential for thymopoiesis and the development of several secondary lymphoid tissues, including lymph nodes and Peyer's patches. Required for the generation of LTi (lymphoid tissue inducer) cells. Regulates thymocyte survival through DNA-binding on ROREs of target gene promoter regions and recruitment of coactivaros via the AF-2. Also plays a key role, downstream of IL6 and TGFB and synergistically with RORA, for lineage specification of uncommitted CD4(+) T-helper (T(H)) cells into T(H)17 cells, antagonizing the T(H)1 program. Probably regulates IL17 and IL17F expression on T(H) by binding to the essential enhancer conserved non-coding sequence 2 (CNS2) in the IL17-IL17F locus. May also play a role in the pre-TCR activation cascade leading to the maturation of alpha/beta T-cells and may participate in the regulation of DNA accessibility in the TCR-J(alpha) locus. This is Nuclear receptor ROR-gamma (RORC) from Homo sapiens (Human).